We begin with the raw amino-acid sequence, 119 residues long: MGVFTFVCKNGGGAWSAKQHEGELESSASSTYELQRKLVQVSLSADSSGGVQSSFSLVSPTSAVFQVIVGGGGGGGFSAGGAASSGGGAGEAAAAPKEDEKKKEESEEEEGDFGFDLFG.

Residues 79-90 (AGGAASSGGGAG) are compositionally biased toward gly residues. The disordered stretch occupies residues 79-119 (AGGAASSGGGAGEAAAAPKEDEKKKEESEEEEGDFGFDLFG). A compositionally biased stretch (basic and acidic residues) spans 96–105 (PKEDEKKKEE).

This sequence belongs to the eukaryotic ribosomal protein P1/P2 family. Post-translationally, phosphorylated.

Plays an important role in the elongation step of protein synthesis. The polypeptide is Large ribosomal subunit protein P3z (RPP3A) (Arabidopsis thaliana (Mouse-ear cress)).